The primary structure comprises 311 residues: 4-hydroxy-tetrahydrodipicolinate synthase (311 aa).

Residue Thr51 coordinates pyruvate. Catalysis depends on Tyr140, which acts as the Proton donor/acceptor. Lys168 serves as the catalytic Schiff-base intermediate with substrate. Ile209 contributes to the pyruvate binding site.

The protein belongs to the DapA family. As to quaternary structure, homotetramer; dimer of dimers.

Its subcellular location is the cytoplasm. It catalyses the reaction L-aspartate 4-semialdehyde + pyruvate = (2S,4S)-4-hydroxy-2,3,4,5-tetrahydrodipicolinate + H2O + H(+). Its pathway is amino-acid biosynthesis; L-lysine biosynthesis via DAP pathway; (S)-tetrahydrodipicolinate from L-aspartate: step 3/4. In terms of biological role, catalyzes the condensation of (S)-aspartate-beta-semialdehyde [(S)-ASA] and pyruvate to 4-hydroxy-tetrahydrodipicolinate (HTPA). The protein is 4-hydroxy-tetrahydrodipicolinate synthase of Streptococcus pneumoniae (strain 70585).